A 231-amino-acid polypeptide reads, in one-letter code: Putative transglycosylase H16_A0665 (231 aa).

The helical transmembrane segment at 8–28 threads the bilayer; the sequence is FIKLLVLAVIGGALLAAIAIL.

This sequence belongs to the glycosyltransferase 51 family.

The protein resides in the secreted. It is found in the membrane. The protein operates within cell wall biogenesis; peptidoglycan biosynthesis. Its function is as follows. Cell wall formation. The sequence is that of Putative transglycosylase H16_A0665 from Cupriavidus necator (strain ATCC 17699 / DSM 428 / KCTC 22496 / NCIMB 10442 / H16 / Stanier 337) (Ralstonia eutropha).